A 94-amino-acid chain; its full sequence is Small ribosomal subunit protein bS18 (94 aa).

It belongs to the bacterial ribosomal protein bS18 family. Part of the 30S ribosomal subunit. Forms a tight heterodimer with protein bS6.

In terms of biological role, binds as a heterodimer with protein bS6 to the central domain of the 16S rRNA, where it helps stabilize the platform of the 30S subunit. This is Small ribosomal subunit protein bS18 from Leptospira biflexa serovar Patoc (strain Patoc 1 / Ames).